The sequence spans 114 residues: uncharacterized protein (114 aa).

The first 19 residues, 1 to 19 (MKASYLVLIFISIFSMAQA), serve as a signal peptide directing secretion. Phosphoserine is present on S41.

It belongs to the protease inhibitor I9 family.

This is an uncharacterized protein from Saccharomyces cerevisiae (strain ATCC 204508 / S288c) (Baker's yeast).